A 239-amino-acid polypeptide reads, in one-letter code: Large ribosomal subunit protein uL2 (239 aa).

The tract at residues 200 to 239 (VNHPHGGKEHHIGRPSTVSRRAPPGRKVGHIAARRTGRRK) is disordered. Residues 222–239 (PPGRKVGHIAARRTGRRK) are compositionally biased toward basic residues.

This sequence belongs to the universal ribosomal protein uL2 family. Part of the 50S ribosomal subunit. Forms a bridge to the 30S subunit in the 70S ribosome.

Functionally, one of the primary rRNA binding proteins. Required for association of the 30S and 50S subunits to form the 70S ribosome, for tRNA binding and peptide bond formation. It has been suggested to have peptidyltransferase activity; this is somewhat controversial. Makes several contacts with the 16S rRNA in the 70S ribosome. The sequence is that of Large ribosomal subunit protein uL2 from Thermococcus onnurineus (strain NA1).